The primary structure comprises 158 residues: Cyclic pyranopterin monophosphate synthase (158 aa).

Substrate is bound by residues Leu75–His77 and Met113–Glu114. Asp128 is a catalytic residue.

Belongs to the MoaC family. As to quaternary structure, homohexamer; trimer of dimers.

The enzyme catalyses (8S)-3',8-cyclo-7,8-dihydroguanosine 5'-triphosphate = cyclic pyranopterin phosphate + diphosphate. It functions in the pathway cofactor biosynthesis; molybdopterin biosynthesis. Catalyzes the conversion of (8S)-3',8-cyclo-7,8-dihydroguanosine 5'-triphosphate to cyclic pyranopterin monophosphate (cPMP). In Ralstonia nicotianae (strain ATCC BAA-1114 / GMI1000) (Ralstonia solanacearum), this protein is Cyclic pyranopterin monophosphate synthase.